Reading from the N-terminus, the 203-residue chain is Thymidylate kinase (203 aa).

7–14 provides a ligand contact to ATP; the sequence is GPDGSGKS.

This sequence belongs to the thymidylate kinase family.

It catalyses the reaction dTMP + ATP = dTDP + ADP. In terms of biological role, phosphorylation of dTMP to form dTDP in both de novo and salvage pathways of dTTP synthesis. This chain is Thymidylate kinase, found in Finegoldia magna (strain ATCC 29328 / DSM 20472 / WAL 2508) (Peptostreptococcus magnus).